A 464-amino-acid polypeptide reads, in one-letter code: tRNA-2-methylthio-N(6)-dimethylallyladenosine synthase (464 aa).

Positions 19-135 (GSYWITTFGC…LENLLGKVDL (117 aa)) constitute an MTTase N-terminal domain. Residues C28, C64, C98, C170, C174, and C177 each coordinate [4Fe-4S] cluster. Positions 156 to 394 (RESSICGWVN…DLVEKTARSR (239 aa)) constitute a Radical SAM core domain. The TRAM domain occupies 396–464 (QRYIDNIESV…PFSLTGELSL (69 aa)).

It belongs to the methylthiotransferase family. MiaB subfamily. In terms of assembly, monomer. The cofactor is [4Fe-4S] cluster.

The protein localises to the cytoplasm. The catalysed reaction is N(6)-dimethylallyladenosine(37) in tRNA + (sulfur carrier)-SH + AH2 + 2 S-adenosyl-L-methionine = 2-methylsulfanyl-N(6)-dimethylallyladenosine(37) in tRNA + (sulfur carrier)-H + 5'-deoxyadenosine + L-methionine + A + S-adenosyl-L-homocysteine + 2 H(+). Catalyzes the methylthiolation of N6-(dimethylallyl)adenosine (i(6)A), leading to the formation of 2-methylthio-N6-(dimethylallyl)adenosine (ms(2)i(6)A) at position 37 in tRNAs that read codons beginning with uridine. This Prochlorococcus marinus (strain MIT 9301) protein is tRNA-2-methylthio-N(6)-dimethylallyladenosine synthase.